The following is a 154-amino-acid chain: Aspartate carbamoyltransferase regulatory chain (154 aa).

Residues cysteine 109, cysteine 114, cysteine 138, and cysteine 141 each contribute to the Zn(2+) site.

It belongs to the PyrI family. In terms of assembly, contains catalytic and regulatory chains. Requires Zn(2+) as cofactor.

Functionally, involved in allosteric regulation of aspartate carbamoyltransferase. The polypeptide is Aspartate carbamoyltransferase regulatory chain (Photobacterium profundum (strain SS9)).